We begin with the raw amino-acid sequence, 98 residues long: NADH-ubiquinone oxidoreductase chain 4L (98 aa).

3 consecutive transmembrane segments (helical) span residues 1-21, 29-49, and 61-81; these read MPYIYMNITLAFVISLIGTLM, SLLCLEGMMLSLFTLNALLSL, and LILLVFAACEAAVGLALLVMI.

Belongs to the complex I subunit 4L family. As to quaternary structure, core subunit of respiratory chain NADH dehydrogenase (Complex I) which is composed of 45 different subunits.

The protein localises to the mitochondrion inner membrane. The catalysed reaction is a ubiquinone + NADH + 5 H(+)(in) = a ubiquinol + NAD(+) + 4 H(+)(out). Core subunit of the mitochondrial membrane respiratory chain NADH dehydrogenase (Complex I) which catalyzes electron transfer from NADH through the respiratory chain, using ubiquinone as an electron acceptor. Part of the enzyme membrane arm which is embedded in the lipid bilayer and involved in proton translocation. The chain is NADH-ubiquinone oxidoreductase chain 4L (MT-ND4L) from Loxodonta africana (African elephant).